The primary structure comprises 338 residues: MVDHEGEDSSPTDGFGHIPVLLHRADELLGPALTVNDPQGGGAVMIDATLGLGGHSEHFLRTYPQLRLIALDRDPHALEIAGGRLAPFADRITFVHTRYDGIEDALDQAGLPAQESVHGILFDLGVSSMQLDESDRGFAYSIDAPLDMRMDPTTGITAAEVLNTYSHGDLARILSTYGEERFAGKIASEIVRQRAKEPFTTSAALVELLYRSIPAATRRTGGHPAKRTFQALRVEVNGELDSLRAAVPAALDALTVGGRVVFMSYQSLEDRVVKQEITPRSKSKSPEGLPVELPGMGPEFRILTRGAERASEQEVEENPRSAPVRLRAAERIARRSAA.

S-adenosyl-L-methionine is bound by residues 53 to 55 (GGH), D72, Y99, D123, and Q130. Disordered stretches follow at residues 276-297 (EITP…PGMG) and 304-323 (TRGA…RSAP).

Belongs to the methyltransferase superfamily. RsmH family.

The protein resides in the cytoplasm. The enzyme catalyses cytidine(1402) in 16S rRNA + S-adenosyl-L-methionine = N(4)-methylcytidine(1402) in 16S rRNA + S-adenosyl-L-homocysteine + H(+). Specifically methylates the N4 position of cytidine in position 1402 (C1402) of 16S rRNA. This chain is Ribosomal RNA small subunit methyltransferase H, found in Rhodococcus jostii (strain RHA1).